A 384-amino-acid chain; its full sequence is tRNA-specific 2-thiouridylase MnmA (384 aa).

ATP-binding positions include 29-36 (AMSGGVDS) and L55. The Nucleophile role is filled by C123. A disulfide bond links C123 and C220. ATP is bound at residue G147. Residues 169–171 (RDQ) are interaction with tRNA. Residue C220 is the Cysteine persulfide intermediate of the active site.

The protein belongs to the MnmA/TRMU family.

The protein localises to the cytoplasm. It catalyses the reaction S-sulfanyl-L-cysteinyl-[protein] + uridine(34) in tRNA + AH2 + ATP = 2-thiouridine(34) in tRNA + L-cysteinyl-[protein] + A + AMP + diphosphate + H(+). Functionally, catalyzes the 2-thiolation of uridine at the wobble position (U34) of tRNA, leading to the formation of s(2)U34. This Dinoroseobacter shibae (strain DSM 16493 / NCIMB 14021 / DFL 12) protein is tRNA-specific 2-thiouridylase MnmA.